Reading from the N-terminus, the 682-residue chain is Glutamine--fructose-6-phosphate aminotransferase [isomerizing] 2 (682 aa).

Cys-2 serves as the catalytic For GATase activity. A Glutamine amidotransferase type-2 domain is found at 2–288; that stretch reads CGIFAYMNYR…DDDIAAVADG (287 aa). A Phosphoserine modification is found at Ser-244. SIS domains are found at residues 360–499 and 531–672; these read HLKE…DRIS and LALE…VDFP. Substrate contacts are provided by residues 377-378, 422-424, Thr-427, and His-578; these read TS and SQS.

It carries out the reaction D-fructose 6-phosphate + L-glutamine = D-glucosamine 6-phosphate + L-glutamate. Its pathway is nucleotide-sugar biosynthesis; UDP-N-acetyl-alpha-D-glucosamine biosynthesis; alpha-D-glucosamine 6-phosphate from D-fructose 6-phosphate: step 1/1. Controls the flux of glucose into the hexosamine pathway. Most likely involved in regulating the availability of precursors for N- and O-linked glycosylation of proteins. In Bos taurus (Bovine), this protein is Glutamine--fructose-6-phosphate aminotransferase [isomerizing] 2 (GFPT2).